The primary structure comprises 475 residues: Ribulose bisphosphate carboxylase large chain (475 aa).

Residues methionine 1–serine 2 constitute a propeptide that is removed on maturation. Proline 3 carries the post-translational modification N-acetylproline. The residue at position 14 (lysine 14) is an N6,N6,N6-trimethyllysine. Residues asparagine 123 and threonine 173 each coordinate substrate. Lysine 175 serves as the catalytic Proton acceptor. Position 177 (lysine 177) interacts with substrate. Mg(2+) contacts are provided by lysine 201, aspartate 203, and glutamate 204. N6-carboxylysine is present on lysine 201. Histidine 294 functions as the Proton acceptor in the catalytic mechanism. The substrate site is built by arginine 295, histidine 327, and serine 379.

Belongs to the RuBisCO large chain family. Type I subfamily. Heterohexadecamer of 8 large chains and 8 small chains; disulfide-linked. The disulfide link is formed within the large subunit homodimers. Requires Mg(2+) as cofactor. The disulfide bond which can form in the large chain dimeric partners within the hexadecamer appears to be associated with oxidative stress and protein turnover.

Its subcellular location is the plastid. The protein resides in the chloroplast. The catalysed reaction is 2 (2R)-3-phosphoglycerate + 2 H(+) = D-ribulose 1,5-bisphosphate + CO2 + H2O. It carries out the reaction D-ribulose 1,5-bisphosphate + O2 = 2-phosphoglycolate + (2R)-3-phosphoglycerate + 2 H(+). Its function is as follows. RuBisCO catalyzes two reactions: the carboxylation of D-ribulose 1,5-bisphosphate, the primary event in carbon dioxide fixation, as well as the oxidative fragmentation of the pentose substrate in the photorespiration process. Both reactions occur simultaneously and in competition at the same active site. This is Ribulose bisphosphate carboxylase large chain from Corylus cornuta (Beaked hazel).